Reading from the N-terminus, the 245-residue chain is MKMKQISDTTLKITMSLEDLMDRGMEIADFLVPQEKTEEFFYAILDELEMPDSFLDTGMLSFRVTPKPDKVDVFVTKSKIDQNLDFEDLSDLPDMEELAQMSPDEFIKTLEKSIADKTKDDIEAIQSLEQVEAKEEEQEQAEQEAESKKEPYIYYILSFAKLADLVVFAKTVTFEMETSELYKMNERYYLTILVDIENHPSPYPAWLLARMREFADDSDISRSVLQEYGQVLMSHDAVLNLQKIG.

This sequence belongs to the MecA family. Homodimer.

In terms of biological role, enables the recognition and targeting of unfolded and aggregated proteins to the ClpC protease or to other proteins involved in proteolysis. This chain is Adapter protein MecA, found in Streptococcus pneumoniae serotype 19F (strain G54).